A 450-amino-acid chain; its full sequence is MAQFFKAKPNSSKQLSAKLSLNVDQLDHLGAGIAQYQGKVVFIPGALPDETVTVQLTEQKKNYARAKLIKVDAQSPERVEPECPHYHTCGGCDLQHMSLSGQREHKEAALLDIMAKFAGTEGGALSPALTGEGWHYRRRARLATLFDKNTKHLSLGFRAASSSNVVPISQCQVLAKPLSDLIVPFAKLLNQLSAKASLGHLELIAADNGHFAVLRITKALNDKDLAKLSAFAEQHQIYICLQDNEGQFQGVGVELVLPVYQLLDENAQSDAVSLSFTPGNFVQVNSQINKAMVAQAMDWLAPAPDERILDLFCGMGNFSLPLAKMGADVIGVEGVAEMVSQARVNAKANNLDKLTFYHGDLSADLSLEPWMGKIDKLLLDPARAGAFESLQWLKKMKPRKVLYVSCNPASLARDSAVLLERGYRLQRLGLIDMFPQTHHIEAMALFELTK.

In terms of domain architecture, TRAM spans 12-70; it reads SKQLSAKLSLNVDQLDHLGAGIAQYQGKVVFIPGALPDETVTVQLTEQKKNYARAKLIK. Residues C83, C89, C92, and C171 each contribute to the [4Fe-4S] cluster site. The S-adenosyl-L-methionine site is built by Q283, F312, N317, E333, D360, and D380. The active-site Nucleophile is C406.

It belongs to the class I-like SAM-binding methyltransferase superfamily. RNA M5U methyltransferase family. RlmD subfamily.

It catalyses the reaction uridine(1939) in 23S rRNA + S-adenosyl-L-methionine = 5-methyluridine(1939) in 23S rRNA + S-adenosyl-L-homocysteine + H(+). Functionally, catalyzes the formation of 5-methyl-uridine at position 1939 (m5U1939) in 23S rRNA. This chain is 23S rRNA (uracil(1939)-C(5))-methyltransferase RlmD, found in Shewanella sp. (strain W3-18-1).